The primary structure comprises 131 residues: Histone H2A.1 (131 aa).

Serine 2 is modified (N-acetylserine). Lysine 4 and lysine 7 each carry N6-acetyllysine. Glutamine 105 bears the N5-methylglutamine mark. Residue lysine 126 forms a Glycyl lysine isopeptide (Lys-Gly) (interchain with G-Cter in SUMO) linkage. Phosphoserine is present on serine 128. The short motif at 128 to 129 is the [ST]-Q motif element; sequence SQ.

This sequence belongs to the histone H2A family. The nucleosome is a histone octamer containing two molecules each of H2A, H2B, H3 and H4 assembled in one H3-H4 heterotetramer and two H2A-H2B heterodimers. The octamer wraps approximately 147 bp of DNA. In terms of processing, phosphorylated to form H2AS128ph (gamma-H2A) in response to DNA double-strand breaks (DSBs) generated by exogenous genotoxic agents and by stalled replication forks. Phosphorylation is dependent on the DNA damage checkpoint kinases MEC1/ATR and TEL1/ATM, spreads on either side of a detected DSB site and may mark the surrounding chromatin for recruitment of proteins required for DNA damage signaling and repair. Gamma-H2A is removed from the DNA prior to the strand invasion-primer extension step of the repair process and subsequently dephosphorylated by PPH3, a component of the histone H2A phosphatase complex (HTP-C). Dephosphorylation is necessary for efficient recovery from the DNA damage checkpoint. Sumoylation on Lys-126 may lead to transcriptional repression. Post-translationally, acetylated by ESA1 to form H2AK4ac and H2AK7ac.

The protein localises to the nucleus. Its subcellular location is the chromosome. Functionally, core component of nucleosome which plays a central role in DNA double strand break (DSB) repair. Nucleosomes wrap and compact DNA into chromatin, limiting DNA accessibility to the cellular machineries which require DNA as a template. Histones thereby play a central role in transcription regulation, DNA repair, DNA replication and chromosomal stability. DNA accessibility is regulated via a complex set of post-translational modifications of histones, also called histone code, and nucleosome remodeling. This Eremothecium gossypii (strain ATCC 10895 / CBS 109.51 / FGSC 9923 / NRRL Y-1056) (Yeast) protein is Histone H2A.1 (HTA1).